A 192-amino-acid polypeptide reads, in one-letter code: Transcription termination/antitermination protein NusG (192 aa).

In terms of domain architecture, KOW spans 140 to 168; that stretch reads VGEVVTVTDGPFETFMGTVEEIDKERNRL.

It belongs to the NusG family.

Its function is as follows. Participates in transcription elongation, termination and antitermination. The chain is Transcription termination/antitermination protein NusG from Rickettsia typhi (strain ATCC VR-144 / Wilmington).